The primary structure comprises 344 residues: Trace amine-associated receptor 8a (344 aa).

At 1–33 (MTSNFSQAPLQLCYENVNASCIKTPYSPGLRVL) the chain is on the extracellular side. 2 N-linked (GlcNAc...) asparagine glycosylation sites follow: asparagine 4 and asparagine 18. 2 disulfide bridges follow: cysteine 21-cysteine 185 and cysteine 96-cysteine 189. A helical transmembrane segment spans residues 34–54 (LYMVFGFGAVLAVCGNLLVVI). Residues 55-67 (SVLHFKQLHSPAN) are Cytoplasmic-facing. A helical transmembrane segment spans residues 68–88 (FLIASLASADFLVGISVMPFS). Residues 89 to 102 (MVRSIESCWYFGDT) are Extracellular-facing. The chain crosses the membrane as a helical span at residues 103 to 127 (FCSLHSCCDAAFCYSSLFHLCFISV). The Cytoplasmic portion of the chain corresponds to 128–146 (DRYIAVTDPLVYPTKFTVS). Residues 147-167 (VSGICISISWILPLVYSSAVF) traverse the membrane as a helical segment. Over 168-196 (YTGISATGIENLVSALNCVGGCQIVVNQD) the chain is Extracellular. The helical transmembrane segment at 197–217 (WVLIDFLLFLIPTLVMIILYS) threads the bilayer. Residues 218–260 (KIFLVAKQQAVKIETSISGSKGESSLESHKARVAKRERKAAKT) lie on the Cytoplasmic side of the membrane. A helical transmembrane segment spans residues 261-281 (LGVTVVAFMVSWLPYTIDTLI). The Extracellular portion of the chain corresponds to 282-291 (DAFMGFITPA). Residues 292-314 (YVYEICCWSAYYNSAMNPLIYAF) traverse the membrane as a helical segment. Residues 315 to 344 (FYPWFRKAIKLILSGEILKSHSSTMSLFSE) are Cytoplasmic-facing.

The protein belongs to the G-protein coupled receptor 1 family.

The protein resides in the cell membrane. Olfactory receptor activated by trace amines. Trace amine compounds are enriched in animal body fluids and act on trace amine-associated receptors (TAARs) to elicit both intraspecific and interspecific innate behaviors. Ligand-binding causes a conformation change that triggers signaling via G(s)-class of G alpha proteins (GNAL or GNAS). This chain is Trace amine-associated receptor 8a, found in Rattus norvegicus (Rat).